The chain runs to 1139 residues: Liprin-alpha (1139 aa).

Coiled-coil stretches lie at residues 30-144 (PSDR…SLRM), 172-298 (EHHK…KNQI), 329-517 (IRDL…AQFQ), and 655-701 (QDAQ…EFYD). Disordered stretches follow at residues 700–720 (YDDQ…LDNM) and 764–847 (NQFD…DRRK). 2 stretches are compositionally biased toward polar residues: residues 704-719 (GIST…QLDN) and 778-787 (PASSVASSTD). 3 SAM domains span residues 867–933 (WNGP…MVSL), 952–1016 (NHEY…LKKV), and 1040–1109 (WSNE…LVND).

Belongs to the liprin family. Liprin-alpha subfamily. As to expression, detected in vulval muscle and other cells near the vulva; in neurons located in the lateral ganglion, posterior ganglion, ventral cord and lateral body; and in pharyngeal and body wall muscle cells.

It is found in the synapse. In terms of biological role, may play a role in regulating the structure of the neuronal region, called the active zone, from which synaptic vesicles send neurotransmitter signals across the synapse. This may be in association with the liprin-beta protein hlb-1. The polypeptide is Liprin-alpha (Caenorhabditis elegans).